Consider the following 612-residue polypeptide: Calcium-dependent protein kinase 27 (612 aa).

Gly2 carries N-myristoyl glycine lipidation. The tract at residues 23 to 132 (PRHAAPSSPS…AHIKRISSAG (110 aa)) is disordered. The segment covering 28-50 (PSSPSQPTTTSRSIPVVLPSAPS) has biased composition (low complexity). Residues 51-100 (SKPPPPTQTAPPVPVVISEPPPPQPQPEPQPAAPSQPPPPQEQPSPPPPA) are compositionally biased toward pro residues. Positions 117 to 127 (SRAKKPAHIKR) are enriched in basic residues. In terms of domain architecture, Protein kinase spans 150-408 (YSLGRKLGQG…AHEVLCHPWL (259 aa)). ATP contacts are provided by residues 156-164 (LGQGQFGTT) and Lys179. The Proton acceptor role is filled by Asp274. Residues 414–444 (APDKPLDSAVLSRLRQFSAMNKLKKMALRVI) are autoinhibitory domain. EF-hand domains are found at residues 451 to 486 (EEIA…VGAN), 487 to 522 (MKES…LNKV), 523 to 558 (ERED…FGIE), and 561 to 592 (RLED…TTTG). Residues Asp464, Asp466, Ser468, Gln470, Glu475, Asp500, Asp502, Ser504, Thr506, Glu511, Asp536, Asp538, Ser540, Tyr542, Glu547, Asp570, Asp572, Asp574, Arg576, and Glu581 each coordinate Ca(2+).

This sequence belongs to the protein kinase superfamily. Ser/Thr protein kinase family. CDPK subfamily.

Its subcellular location is the membrane. The enzyme catalyses L-seryl-[protein] + ATP = O-phospho-L-seryl-[protein] + ADP + H(+). The catalysed reaction is L-threonyl-[protein] + ATP = O-phospho-L-threonyl-[protein] + ADP + H(+). Its activity is regulated as follows. Activated by calcium. Autophosphorylation may play an important role in the regulation of the kinase activity. Its function is as follows. May play a role in signal transduction pathways that involve calcium as a second messenger. In Oryza sativa subsp. japonica (Rice), this protein is Calcium-dependent protein kinase 27.